A 100-amino-acid chain; its full sequence is Aspartyl/glutamyl-tRNA(Asn/Gln) amidotransferase subunit C (100 aa).

This sequence belongs to the GatC family. In terms of assembly, heterotrimer of A, B and C subunits.

The catalysed reaction is L-glutamyl-tRNA(Gln) + L-glutamine + ATP + H2O = L-glutaminyl-tRNA(Gln) + L-glutamate + ADP + phosphate + H(+). It carries out the reaction L-aspartyl-tRNA(Asn) + L-glutamine + ATP + H2O = L-asparaginyl-tRNA(Asn) + L-glutamate + ADP + phosphate + 2 H(+). Its function is as follows. Allows the formation of correctly charged Asn-tRNA(Asn) or Gln-tRNA(Gln) through the transamidation of misacylated Asp-tRNA(Asn) or Glu-tRNA(Gln) in organisms which lack either or both of asparaginyl-tRNA or glutaminyl-tRNA synthetases. The reaction takes place in the presence of glutamine and ATP through an activated phospho-Asp-tRNA(Asn) or phospho-Glu-tRNA(Gln). The sequence is that of Aspartyl/glutamyl-tRNA(Asn/Gln) amidotransferase subunit C from Janthinobacterium sp. (strain Marseille) (Minibacterium massiliensis).